A 237-amino-acid chain; its full sequence is ATP synthase subunit 4, mitochondrial (237 aa).

The N-terminal 30 residues, 1 to 30, are a transit peptide targeting the mitochondrion; that stretch reads MFRALTLKASARPVVAGLCSRQAPIAAVRY.

Belongs to the eukaryotic ATPase B chain family.

It is found in the mitochondrion. It localises to the mitochondrion inner membrane. Mitochondrial membrane ATP synthase (F(1)F(0) ATP synthase or Complex V) produces ATP from ADP in the presence of a proton gradient across the membrane which is generated by electron transport complexes of the respiratory chain. F-type ATPases consist of two structural domains, F(1) - containing the extramembraneous catalytic core, and F(0) - containing the membrane proton channel, linked together by a central stalk and a peripheral stalk. During catalysis, ATP synthesis in the catalytic domain of F(1) is coupled via a rotary mechanism of the central stalk subunits to proton translocation. Part of the complex F(0) domain and the peripheric stalk, which acts as a stator to hold the catalytic alpha(3)beta(3) subcomplex and subunit a/ATP6 static relative to the rotary elements. This chain is ATP synthase subunit 4, mitochondrial (ATP4), found in Kluyveromyces lactis (strain ATCC 8585 / CBS 2359 / DSM 70799 / NBRC 1267 / NRRL Y-1140 / WM37) (Yeast).